Here is a 320-residue protein sequence, read N- to C-terminus: Cytochrome f (320 aa).

Positions 1–35 are cleaved as a signal peptide; the sequence is MQTRNAFSWLKKQITRSISVSLMIYILTRTSISSA. Y36, C56, C59, and H60 together coordinate heme. A helical transmembrane segment spans residues 286-305; the sequence is VQGLLFFLASVILAQIFLVL.

Belongs to the cytochrome f family. The 4 large subunits of the cytochrome b6-f complex are cytochrome b6, subunit IV (17 kDa polypeptide, petD), cytochrome f and the Rieske protein, while the 4 small subunits are PetG, PetL, PetM and PetN. The complex functions as a dimer. Requires heme as cofactor.

The protein resides in the plastid. The protein localises to the chloroplast thylakoid membrane. Functionally, component of the cytochrome b6-f complex, which mediates electron transfer between photosystem II (PSII) and photosystem I (PSI), cyclic electron flow around PSI, and state transitions. The sequence is that of Cytochrome f from Atropa belladonna (Belladonna).